We begin with the raw amino-acid sequence, 625 residues long: tRNA uridine 5-carboxymethylaminomethyl modification enzyme MnmG (625 aa).

FAD-binding positions include 16 to 21, Ile128, and Ser183; that span reads GGGHAG. Residue 275–289 coordinates NAD(+); that stretch reads GPRYCPSIEDKVVRF. Gln372 lines the FAD pocket.

The protein belongs to the MnmG family. As to quaternary structure, homodimer. Heterotetramer of two MnmE and two MnmG subunits. Requires FAD as cofactor.

Its subcellular location is the cytoplasm. Functionally, NAD-binding protein involved in the addition of a carboxymethylaminomethyl (cmnm) group at the wobble position (U34) of certain tRNAs, forming tRNA-cmnm(5)s(2)U34. In Protochlamydia amoebophila (strain UWE25), this protein is tRNA uridine 5-carboxymethylaminomethyl modification enzyme MnmG.